We begin with the raw amino-acid sequence, 267 residues long: Tryptophan synthase alpha chain (267 aa).

Residues E47 and D58 each act as proton acceptor in the active site.

This sequence belongs to the TrpA family. In terms of assembly, tetramer of two alpha and two beta chains.

It carries out the reaction (1S,2R)-1-C-(indol-3-yl)glycerol 3-phosphate + L-serine = D-glyceraldehyde 3-phosphate + L-tryptophan + H2O. Its pathway is amino-acid biosynthesis; L-tryptophan biosynthesis; L-tryptophan from chorismate: step 5/5. In terms of biological role, the alpha subunit is responsible for the aldol cleavage of indoleglycerol phosphate to indole and glyceraldehyde 3-phosphate. In Chlorobaculum tepidum (strain ATCC 49652 / DSM 12025 / NBRC 103806 / TLS) (Chlorobium tepidum), this protein is Tryptophan synthase alpha chain.